A 74-amino-acid chain; its full sequence is Mu-Sparatoxin-Hp2 (74 aa).

The first 20 residues, 1–20 (MKIIVLMMMLFAAFSAVVLA), serve as a signal peptide directing secretion. Positions 21–35 (DKSIEDAALDTVMDR) are excised as a propeptide. 3 cysteine pairs are disulfide-bonded: cysteine 42/cysteine 57, cysteine 49/cysteine 62, and cysteine 56/cysteine 66. A Leucine amide modification is found at leucine 73.

As to expression, expressed by the venom gland.

It is found in the secreted. Functionally, weakly nhibits voltage-gated sodium channels Nav1.7/SCN9A. High concentration of the toxin (3 uM) inhibits Nav1.7/SCN9A currents by 80%. The chain is Mu-Sparatoxin-Hp2 from Heteropoda pingtungensis (Pingtung huntsman spider).